The chain runs to 1382 residues: Hepatocyte growth factor receptor (1382 aa).

The N-terminal stretch at 1–24 (MKASAVLAPGILALLFTLVQGSDG) is a signal peptide. The Extracellular portion of the chain corresponds to 25–935 (ECHEALAKSE…VQPDQNFTGL (911 aa)). The Sema domain occupies 27–516 (HEALAKSEMN…TGKRITKIPL (490 aa)). N-linked (GlcNAc...) asparagine glycans are attached at residues Asn-45, Asn-100, and Asn-106. Disulfide bonds link Cys-95–Cys-101, Cys-98–Cys-160, Cys-133–Cys-141, and Cys-173–Cys-176. Residues Asn-203 and Asn-359 are each glycosylated (N-linked (GlcNAc...) asparagine). Cystine bridges form between Cys-299/Cys-364 and Cys-386/Cys-398. Asn-400 and Asn-406 each carry an N-linked (GlcNAc...) asparagine glycan. Cystine bridges form between Cys-521/Cys-539, Cys-527/Cys-562, Cys-530/Cys-546, and Cys-542/Cys-552. 3 consecutive IPT/TIG domains span residues 564–656 (PAIH…FSYV), 658–740 (PVIT…FSYQ), and 743–837 (PVVY…LIYV). Residue Thr-583 is glycosylated (O-linked (Man) threonine). N-linked (GlcNAc...) asparagine glycosylation is found at Asn-608 and Asn-636. O-linked (Man) threonine glycans are attached at residues Thr-677 and Thr-762. 3 N-linked (GlcNAc...) asparagine glycosylation sites follow: Asn-786, Asn-880, and Asn-931. Residues 936-956 (IVGVVSISIILLLLLGLFLWM) traverse the membrane as a helical segment. Over 957–1382 (KKRKQIKDLG…QDNINGEVDT (426 aa)) the chain is Cytoplasmic. Position 967 is a phosphoserine (Ser-967). Phosphothreonine is present on Thr-978. Ser-991, Ser-998, and Ser-1001 each carry phosphoserine. Phosphotyrosine is present on Tyr-1004. In terms of domain architecture, Protein kinase spans 1079 to 1346 (VHFNEVIGRG…RISAIFSTFI (268 aa)). ATP-binding positions include 1085–1093 (IGRGHFGCV) and Lys-1111. The Proton acceptor role is filled by Asp-1205. An interaction with RANBP9 region spans residues 1213–1382 (LDEKFTVKVA…QDNINGEVDT (170 aa)). At Tyr-1231 the chain carries Phosphotyrosine. 2 positions are modified to phosphotyrosine; by autocatalysis: Tyr-1235 and Tyr-1236. Phosphothreonine is present on Thr-1290. The interval 1321–1360 (WHPKAEMRPSFSELVSRISAIFSTFIGEHYVHVNATYVNV) is interaction with MUC20. 2 positions are modified to phosphotyrosine; by autocatalysis: Tyr-1350 and Tyr-1357. Tyr-1366 carries the phosphotyrosine modification.

Belongs to the protein kinase superfamily. Tyr protein kinase family. Heterodimer made of an alpha chain (50 kDa) and a beta chain (145 kDa) which are disulfide linked. Binds PLXNB1. Interacts when phosphorylated with downstream effectors including STAT3, PIK3R1, SRC, PCLG1, GRB2 and GAB1. Interacts with SPSB1, SPSB2 and SPSB4. Interacts with INPP5D/SHIP1. When phosphorylated at Tyr-1357, interacts with INPPL1/SHIP2. Interacts with RANBP9 and RANBP10, as well as SPSB1, SPSB2, SPSB3 and SPSB4. SPSB1 binding occurs in the presence and in the absence of HGF, however HGF treatment has a positive effect on this interaction. Interacts with MUC20; prevents interaction with GRB2 and suppresses hepatocyte growth factor-induced cell proliferation. Interacts with GRB10. Interacts with PTPN1 and PTPN2. Interacts with HSP90AA1 and HSP90AB1; the interaction suppresses MET kinase activity. Interacts with tensin TNS3. Interacts (when phosphorylated) with tensin TNS4 (via SH2 domain); the interaction increases MET protein stability by inhibiting MET endocytosis and subsequent lysosomal degradation. Autophosphorylated in response to ligand binding on Tyr-1235 and Tyr-1236 in the kinase domain leading to further phosphorylation of Tyr-1350 and Tyr-1357 in the C-terminal multifunctional docking site. Dephosphorylated by PTPRJ at Tyr-1350 and Tyr-1366. Dephosphorylated by PTPN1 and PTPN2. In terms of processing, ubiquitinated. Ubiquitination by CBL regulates the receptor stability and activity through proteasomal degradation. Post-translationally, O-mannosylation of IPT/TIG domains by TMEM260 is required for protein maturation. O-mannosylated residues are composed of single mannose glycans that are not elongated or modified.

The protein resides in the membrane. The catalysed reaction is L-tyrosyl-[protein] + ATP = O-phospho-L-tyrosyl-[protein] + ADP + H(+). Its activity is regulated as follows. In its inactive state, the C-terminal tail interacts with the catalytic domain and inhibits the kinase activity. Upon ligand binding, the C-terminal tail is displaced and becomes phosphorylated, thus increasing the kinase activity. Its function is as follows. Receptor tyrosine kinase that transduces signals from the extracellular matrix into the cytoplasm by binding to hepatocyte growth factor/HGF ligand. Regulates many physiological processes including proliferation, scattering, morphogenesis and survival. Ligand binding at the cell surface induces autophosphorylation of MET on its intracellular domain that provides docking sites for downstream signaling molecules. Following activation by ligand, interacts with the PI3-kinase subunit PIK3R1, PLCG1, SRC, GRB2, STAT3 or the adapter GAB1. Recruitment of these downstream effectors by MET leads to the activation of several signaling cascades including the RAS-ERK, PI3 kinase-AKT, or PLCgamma-PKC. The RAS-ERK activation is associated with the morphogenetic effects while PI3K/AKT coordinates prosurvival effects. During embryonic development, MET signaling plays a role in gastrulation, development and migration of muscles and neuronal precursors, angiogenesis and kidney formation. In adults, participates in wound healing as well as organ regeneration and tissue remodeling. Also promotes differentiation and proliferation of hematopoietic cells. In Microcebus murinus (Gray mouse lemur), this protein is Hepatocyte growth factor receptor (MET).